The chain runs to 393 residues: Geranylgeranyl pyrophosphate synthase 2 (393 aa).

K109, R112, and H141 together coordinate isopentenyl diphosphate. Positions 148 and 152 each coordinate Mg(2+). R157 is a binding site for dimethylallyl diphosphate. R158 lines the isopentenyl diphosphate pocket. Residues K235, T236, and Q275 each contribute to the dimethylallyl diphosphate site. A Mg(2+)-binding site is contributed by D278. Positions 282, 292, and 302 each coordinate dimethylallyl diphosphate.

It belongs to the FPP/GGPP synthase family. Mg(2+) is required as a cofactor.

The enzyme catalyses isopentenyl diphosphate + dimethylallyl diphosphate = (2E)-geranyl diphosphate + diphosphate. It catalyses the reaction isopentenyl diphosphate + (2E)-geranyl diphosphate = (2E,6E)-farnesyl diphosphate + diphosphate. The catalysed reaction is isopentenyl diphosphate + (2E,6E)-farnesyl diphosphate = (2E,6E,10E)-geranylgeranyl diphosphate + diphosphate. It functions in the pathway plant hormone biosynthesis; gibberellin biosynthesis. In terms of biological role, geranylgeranyl pyrophosphate synthase; part of the gene cluster that mediates the biosynthesis of gibberellins (GAs), diterpenoids that may provide a selective advantage during infection of the preferred host plant, rice. Gibberellins (GAs) are diterpenoids and are synthesized via the mevalonate pathway. Biosynthesis of the major metabolite GA3 (gibberellic acid) from geranylgeranyl diphosphate (GGPP) requires 13 steps. The GGPP produced by the geranylgeranyl diphosphate synthase GGS2 is converted to ent-kaurene via ent-copalyldiphosphate in a two-step cyclization reaction performed by the bifunctional ent-copalyl diphosphate synthase/ent-kaurene synthase enzyme (CPS/KS). Ent-Kaurene is metabolized to GAs by a series of oxidation reactions catalyzed by cytochrome P450 monooxygenases. Cytochrome P450 monooxygenase P450-4 is an ent-kaurene oxidase that catalyzes the three oxidation steps between ent-kaurene and ent-kaurenoic acid. The highly multifunctional cytochrome P450 monooxygenase P450-1 then catalyzes four steps involving oxidation at two carbon atoms, in the main pathway from ent-kaurenoic acid to GA14 via GA12-aldehyde as well as producing kaurenolides and fujenoic acids as by-products. The cytochrome P450 monooxygenase P450-2 then converts GA14 to GA4 by removal of C-20. GA4 is further converted to GA7 by the GA4 desaturase DES via 1,2-desaturation before cytochrome P450 monooxygenase P450-3, a 13-hydroxylase, hydroxylates GA7 to GA3, the final product of the GA-biosynthetic pathway. This is Geranylgeranyl pyrophosphate synthase 2 from Gibberella fujikuroi (strain CBS 195.34 / IMI 58289 / NRRL A-6831) (Bakanae and foot rot disease fungus).